A 235-amino-acid chain; its full sequence is MAEQTHVLFVEDDDVIREATQLALERDGFAVTAMPDGLSGLEAFRANRPDIALLDVMVPGLDGVSLCRRIRDESTVPVIMLSARADSIDVVLGLEAGADDYVTKPFDGAVLVARIRAVLRRFGHASGPNSRPAEDSSAPDGGVLTFGELEIDTEGMEVRRSGQPVALTPTEMRLLLEFSSAPGTVLSRDKLLERVWDYGWGGDTRVVDVHVQRLRTKIGQDRIDTVRGFGYKLKA.

The Response regulatory domain occupies histidine 6–leucine 119. A 4-aspartylphosphate modification is found at aspartate 55. A DNA-binding region (ompR/PhoB-type) is located at residues glycine 141–alanine 235.

In terms of processing, phosphorylated by CseC.

Its subcellular location is the cytoplasm. In terms of biological role, member of the two-component regulatory system CseB/CseC involved in the stability of the cell envelope. CseB activates transcription of RNA polymerase sigma-E factor, in response to changes in the cell envelope. In Streptomyces avermitilis (strain ATCC 31267 / DSM 46492 / JCM 5070 / NBRC 14893 / NCIMB 12804 / NRRL 8165 / MA-4680), this protein is Transcriptional regulatory protein CseB (cseB).